The chain runs to 291 residues: Orotidine 5'-phosphate decarboxylase (291 aa).

Lys-97 acts as the Proton donor in catalysis.

Belongs to the OMP decarboxylase family. Type 2 subfamily.

The catalysed reaction is orotidine 5'-phosphate + H(+) = UMP + CO2. It participates in pyrimidine metabolism; UMP biosynthesis via de novo pathway; UMP from orotate: step 2/2. This Clostridium kluyveri (strain ATCC 8527 / DSM 555 / NBRC 12016 / NCIMB 10680 / K1) protein is Orotidine 5'-phosphate decarboxylase.